We begin with the raw amino-acid sequence, 194 residues long: MDMGSKEVLMESPPDYSTGPRSQFRIPCCPVHLKRLLIVVVVVVLVVVVIVGALLMGLHMSQKHTEMVLEMSIGGAPETQKRLALSEHTDTIATFSIGSTGIVLYDYQRLLTAYKPAPGTYCYIMKMAPESIPSLEALARKFKNFQAKSSTPTSKLGQEEGHSAGSDSDSSGRDLAFLGLAVSTLCGELPLYYI.

A disordered region spans residues 1–21 (MDMGSKEVLMESPPDYSTGPR). Positions 1-23 (MDMGSKEVLMESPPDYSTGPRSQ) are excised as a propeptide. 2 S-palmitoyl cysteine lipidation sites follow: cysteine 28 and cysteine 29. Residues 59-194 (HMSQKHTEMV…LCGELPLYYI (136 aa)) constitute a propeptide that is removed on maturation. In terms of domain architecture, BRICHOS spans 95-194 (FSIGSTGIVL…LCGELPLYYI (100 aa)). A disulfide bond links cysteine 122 and cysteine 186. Positions 149-170 (SSTPTSKLGQEEGHSAGSDSDS) are disordered.

Its subcellular location is the secreted. It is found in the extracellular space. It localises to the surface film. In terms of biological role, pulmonary surfactant associated proteins promote alveolar stability by lowering the surface tension at the air-liquid interface in the peripheral air spaces. The polypeptide is Surfactant protein C (Rattus norvegicus (Rat)).